Consider the following 211-residue polypeptide: Probable nicotinate-nucleotide adenylyltransferase (211 aa).

This sequence belongs to the NadD family.

It catalyses the reaction nicotinate beta-D-ribonucleotide + ATP + H(+) = deamido-NAD(+) + diphosphate. The protein operates within cofactor biosynthesis; NAD(+) biosynthesis; deamido-NAD(+) from nicotinate D-ribonucleotide: step 1/1. In terms of biological role, catalyzes the reversible adenylation of nicotinate mononucleotide (NaMN) to nicotinic acid adenine dinucleotide (NaAD). This is Probable nicotinate-nucleotide adenylyltransferase from Legionella pneumophila (strain Corby).